Here is a 249-residue protein sequence, read N- to C-terminus: Ubiquinone biosynthesis protein COQ4 homolog, mitochondrial (249 aa).

Zn(2+)-binding residues include histidine 134, aspartate 135, histidine 138, and glutamate 150.

This sequence belongs to the COQ4 family. Component of a multi-subunit COQ enzyme complex. It depends on Zn(2+) as a cofactor.

It localises to the mitochondrion inner membrane. It catalyses the reaction a 4-hydroxy-3-methoxy-5-(all-trans-polyprenyl)benzoate + H(+) = a 2-methoxy-6-(all-trans-polyprenyl)phenol + CO2. Its pathway is cofactor biosynthesis; ubiquinone biosynthesis. Its function is as follows. Lyase that catalyzes the C1-decarboxylation of 4-hydroxy-3-methoxy-5-(all-trans-polyprenyl)benzoic acid into 2-methoxy-6-(all-trans-polyprenyl)phenol during ubiquinone biosynthesis. The polypeptide is Ubiquinone biosynthesis protein COQ4 homolog, mitochondrial (Trypanosoma brucei brucei (strain 927/4 GUTat10.1)).